A 129-amino-acid chain; its full sequence is Follitropin subunit beta (129 aa).

The signal sequence occupies residues 1 to 20 (MKSVQLCFLFCCWRAICCKS). Disulfide bonds link Cys21–Cys69, Cys35–Cys84, Cys38–Cys122, Cys46–Cys100, Cys50–Cys102, and Cys105–Cys112. Residues Asn25 and Asn42 are each glycosylated (N-linked (GlcNAc...) asparagine).

This sequence belongs to the glycoprotein hormones subunit beta family. In terms of assembly, heterodimer. The active follitropin is a heterodimer composed of an alpha chain/CGA shared with other hormones and a unique beta chain/FSHB shown here.

The protein localises to the secreted. Its function is as follows. Together with the alpha chain CGA constitutes follitropin, the follicle-stimulating hormone, and provides its biological specificity to the hormone heterodimer. Binds FSHR, a G protein-coupled receptor, on target cells to activate downstream signaling pathways. Follitropin is involved in follicle development and spermatogenesis in reproductive organs. The chain is Follitropin subunit beta (FSHB) from Ailuropoda melanoleuca (Giant panda).